A 173-amino-acid polypeptide reads, in one-letter code: Glycine cleavage system H protein, mitochondrial (173 aa).

The N-terminal 48 residues, 1–48 (MALRVVRSVRALLCTLRAVPSPAAPCPPRPWQLGVGAVRTLRTGPALL), are a transit peptide targeting the mitochondrion. The 83-residue stretch at 66 to 148 (IGTVGISNFA…YEDGWLIKMT (83 aa)) folds into the Lipoyl-binding domain. K107 carries the N6-lipoyllysine modification.

The protein belongs to the GcvH family. As to quaternary structure, interacts with GLDC. The glycine cleavage system is composed of four proteins: P (GLDC), T (GCST), L (DLD) and H (GCSH). It depends on (R)-lipoate as a cofactor.

Its subcellular location is the mitochondrion. Its function is as follows. The glycine cleavage system catalyzes the degradation of glycine. The H protein (GCSH) shuttles the methylamine group of glycine from the P protein (GLDC) to the T protein (GCST). Has a pivotal role in the lipoylation of enzymes involved in cellular energetics such as the mitochondrial dihydrolipoyllysine-residue acetyltransferase component of pyruvate dehydrogenase complex (DLAT), and the mitochondrial dihydrolipoyllysine-residue succinyltransferase component of 2-oxoglutarate dehydrogenase complex (DLST). This is Glycine cleavage system H protein, mitochondrial from Homo sapiens (Human).